Reading from the N-terminus, the 329-residue chain is Ketol-acid reductoisomerase (NADP(+)) (329 aa).

Residues 2 to 182 form the KARI N-terminal Rossmann domain; sequence TQLFYDTDAD…GGTRAGILET (181 aa). NADP(+)-binding positions include 25 to 28, Ser51, Ser53, and 83 to 86; these read YGSQ and DEFQ. His108 is an active-site residue. Gly134 lines the NADP(+) pocket. Positions 183-328 constitute a KARI C-terminal knotted domain; sequence NFKEETETDL…KGLRSMFSWL (146 aa). Residues Asp191, Glu195, Glu227, and Glu231 each coordinate Mg(2+). Ser252 serves as a coordination point for substrate.

Belongs to the ketol-acid reductoisomerase family. It depends on Mg(2+) as a cofactor.

It catalyses the reaction (2R)-2,3-dihydroxy-3-methylbutanoate + NADP(+) = (2S)-2-acetolactate + NADPH + H(+). The catalysed reaction is (2R,3R)-2,3-dihydroxy-3-methylpentanoate + NADP(+) = (S)-2-ethyl-2-hydroxy-3-oxobutanoate + NADPH + H(+). Its pathway is amino-acid biosynthesis; L-isoleucine biosynthesis; L-isoleucine from 2-oxobutanoate: step 2/4. The protein operates within amino-acid biosynthesis; L-valine biosynthesis; L-valine from pyruvate: step 2/4. In terms of biological role, involved in the biosynthesis of branched-chain amino acids (BCAA). Catalyzes an alkyl-migration followed by a ketol-acid reduction of (S)-2-acetolactate (S2AL) to yield (R)-2,3-dihydroxy-isovalerate. In the isomerase reaction, S2AL is rearranged via a Mg-dependent methyl migration to produce 3-hydroxy-3-methyl-2-ketobutyrate (HMKB). In the reductase reaction, this 2-ketoacid undergoes a metal-dependent reduction by NADPH to yield (R)-2,3-dihydroxy-isovalerate. The chain is Ketol-acid reductoisomerase (NADP(+)) from Prochlorococcus marinus (strain MIT 9215).